Reading from the N-terminus, the 647-residue chain is MSEPLIQLKGIERRYQSGEQEVTVLHPLDLTIEAGEMIAIVGASGSGKSTLMNLLGCLDRPSSGQYLFRGQDTATLDALSLARLRCHHFGFIFQRYHLLPHLNAAANVEIPAVYAGTSRAERQARSQALLTRLGLSDRSHHTPSQLSGGQQQRVSIARALANGGEVILADEPTGALDSQSGKEVMAILKELHAQGHTIILVTHDMEVASHADRIITLKDGRVQEDSGRKPAAVPVTPTAAPAGKEGVGHDWDRYREAARMALHAMLAHRMRTFLTMLGIIIGIAAVVSVVALGQGARAKVIDQINAMGTNTIDIFPGKDWGDEKAASIQTLNKRDLDALLGQPYLEGASPQIAAPGQLRYRNKTSSGSIVGVGNDFFRVKGMKLTNGRLFDERDIQNRAAVAVVDGKTIESLLGKQDPVGQVVLVGTLPVRIIGVVEEETGFGRSSQSVNVWLPYSAVMSRLISQNHFSQLTIRVKDGVQPALAEQAAIELLTQRHGVKDFFTFSSDSIIKSVEKTTATMTLLVSAIAVISLIVGGVGVMNIMLVSVVERTREIGIRIAVGARQSDILQQFLIEAVMVSLLGGMLGVGVSLFIGLLFSLFVESIQMHFSLFSILMAFGCSSLIGILFGYLPARNAARLDPVEALARE.

The ABC transporter domain occupies 6-244; sequence IQLKGIERRY…VTPTAAPAGK (239 aa). An ATP-binding site is contributed by 42–49; the sequence is GASGSGKS. The tract at residues 223–247 is disordered; it reads QEDSGRKPAAVPVTPTAAPAGKEGV. The span at 230–242 shows a compositional bias: low complexity; the sequence is PAAVPVTPTAAPA. The next 4 membrane-spanning stretches (helical) occupy residues 273–293, 527–547, 581–601, and 610–630; these read FLTM…VALG, IAVI…LVSV, LGGM…SLFV, and LFSI…FGYL.

It belongs to the ABC transporter superfamily. Macrolide exporter (TC 3.A.1.122) family. Homodimer. Part of the tripartite efflux system MacAB-TolC, which is composed of an inner membrane transporter, MacB, a periplasmic membrane fusion protein, MacA, and an outer membrane component, TolC. The complex forms a large protein conduit and can translocate molecules across both the inner and outer membranes. Interacts with MacA.

Its subcellular location is the cell inner membrane. In terms of biological role, part of the tripartite efflux system MacAB-TolC. MacB is a non-canonical ABC transporter that contains transmembrane domains (TMD), which form a pore in the inner membrane, and an ATP-binding domain (NBD), which is responsible for energy generation. Confers resistance against macrolides. This is Macrolide export ATP-binding/permease protein MacB 2 from Aeromonas hydrophila subsp. hydrophila (strain ATCC 7966 / DSM 30187 / BCRC 13018 / CCUG 14551 / JCM 1027 / KCTC 2358 / NCIMB 9240 / NCTC 8049).